Reading from the N-terminus, the 251-residue chain is MEKIITTKDVHLYYGSKEALKGITLDFPDKGIHALIGPSGCGKSTYLRTLNRMNDMIENVKIEGEFKFKNQNIYDEKIDLVELRKKIGMVFQQPNPFPFSIYDNVTYGLRMAGIKDKRILDEKVETSLKQAAIWEEVKDNLNKNALALSGGQQQRICIARVLAVAPEVILLDEPTSALDPISTEKIEEMLLTLRDNYTCIMVTHNMQQASRISDTTSFFLSGNLVESNKTKKIFLNPDKEQTADYLSGKFG.

The region spanning 5 to 246 (ITTKDVHLYY…PDKEQTADYL (242 aa)) is the ABC transporter domain. 37–44 (GPSGCGKS) serves as a coordination point for ATP.

Belongs to the ABC transporter superfamily. Phosphate importer (TC 3.A.1.7) family. In terms of assembly, the complex is composed of two ATP-binding proteins (PstB), two transmembrane proteins (PstC and PstA) and a solute-binding protein (PstS).

The protein localises to the cell membrane. It carries out the reaction phosphate(out) + ATP + H2O = ADP + 2 phosphate(in) + H(+). In terms of biological role, part of the ABC transporter complex PstSACB involved in phosphate import. Responsible for energy coupling to the transport system. The sequence is that of Phosphate import ATP-binding protein PstB 2 from Ligilactobacillus salivarius (strain UCC118) (Lactobacillus salivarius).